Reading from the N-terminus, the 262-residue chain is Large ribosomal subunit protein eL8B (262 aa).

Residues 1 to 36 (MAPKGKKVAPAPLATKSAKSSESKNPLFESTPKNFG) form a disordered region.

This sequence belongs to the eukaryotic ribosomal protein eL8 family. Component of the large ribosomal subunit. Mature ribosomes consist of a small (40S) and a large (60S) subunit. The 40S subunit contains about 32 different proteins and 1 molecule of RNA (18S). The 60S subunit contains 45 different proteins and 3 molecules of RNA (25S, 5.8S and 5S).

It localises to the cytoplasm. In terms of biological role, component of the ribosome, a large ribonucleoprotein complex responsible for the synthesis of proteins in the cell. The small ribosomal subunit (SSU) binds messenger RNAs (mRNAs) and translates the encoded message by selecting cognate aminoacyl-transfer RNA (tRNA) molecules. The large subunit (LSU) contains the ribosomal catalytic site termed the peptidyl transferase center (PTC), which catalyzes the formation of peptide bonds, thereby polymerizing the amino acids delivered by tRNAs into a polypeptide chain. The nascent polypeptides leave the ribosome through a tunnel in the LSU and interact with protein factors that function in enzymatic processing, targeting, and the membrane insertion of nascent chains at the exit of the ribosomal tunnel. The protein is Large ribosomal subunit protein eL8B of Candida albicans (strain SC5314 / ATCC MYA-2876) (Yeast).